The following is a 360-amino-acid chain: Phospho-N-acetylmuramoyl-pentapeptide-transferase (360 aa).

10 helical membrane passes run 27 to 47 (ILSI…LIAW), 73 to 93 (TMGG…WADL), 94 to 114 (TNPY…VGFV), 132 to 152 (WKYF…YAYG), 168 to 188 (VMPQ…VGTS), 199 to 219 (GLAI…AWAT), 236 to 256 (ASEL…FLWF), 263 to 283 (VFMG…IAVL), 288 to 308 (FLLV…ILQV), and 338 to 358 (VIVR…ATLK).

Belongs to the glycosyltransferase 4 family. MraY subfamily. It depends on Mg(2+) as a cofactor.

The protein localises to the cell inner membrane. It catalyses the reaction UDP-N-acetyl-alpha-D-muramoyl-L-alanyl-gamma-D-glutamyl-meso-2,6-diaminopimeloyl-D-alanyl-D-alanine + di-trans,octa-cis-undecaprenyl phosphate = di-trans,octa-cis-undecaprenyl diphospho-N-acetyl-alpha-D-muramoyl-L-alanyl-D-glutamyl-meso-2,6-diaminopimeloyl-D-alanyl-D-alanine + UMP. Its pathway is cell wall biogenesis; peptidoglycan biosynthesis. Catalyzes the initial step of the lipid cycle reactions in the biosynthesis of the cell wall peptidoglycan: transfers peptidoglycan precursor phospho-MurNAc-pentapeptide from UDP-MurNAc-pentapeptide onto the lipid carrier undecaprenyl phosphate, yielding undecaprenyl-pyrophosphoryl-MurNAc-pentapeptide, known as lipid I. The chain is Phospho-N-acetylmuramoyl-pentapeptide-transferase from Aliivibrio fischeri (strain MJ11) (Vibrio fischeri).